Here is a 171-residue protein sequence, read N- to C-terminus: Probable chorismate pyruvate-lyase (171 aa).

Residues Met-36, Arg-78, Leu-116, and Glu-157 each contribute to the substrate site.

This sequence belongs to the UbiC family.

The protein localises to the cytoplasm. It carries out the reaction chorismate = 4-hydroxybenzoate + pyruvate. It functions in the pathway cofactor biosynthesis; ubiquinone biosynthesis. In terms of biological role, removes the pyruvyl group from chorismate, with concomitant aromatization of the ring, to provide 4-hydroxybenzoate (4HB) for the ubiquinone pathway. This is Probable chorismate pyruvate-lyase from Bartonella bacilliformis (strain ATCC 35685 / KC583 / Herrer 020/F12,63).